Here is a 257-residue protein sequence, read N- to C-terminus: Phosphatidylglycerol--prolipoprotein diacylglyceryl transferase (257 aa).

7 helical membrane passes run 13-33 (FGPI…AVGG), 49-69 (FLLN…RLMF), 88-108 (IYEG…AGLY), 123-143 (FAVV…IFNH), 152-172 (FFFG…FLLI), 186-202 (YQFW…RGVF), and 223-243 (IGLF…AYWM). Residue R136 participates in a 1,2-diacyl-sn-glycero-3-phospho-(1'-sn-glycerol) binding.

It belongs to the Lgt family.

The protein localises to the cell membrane. It carries out the reaction L-cysteinyl-[prolipoprotein] + a 1,2-diacyl-sn-glycero-3-phospho-(1'-sn-glycerol) = an S-1,2-diacyl-sn-glyceryl-L-cysteinyl-[prolipoprotein] + sn-glycerol 1-phosphate + H(+). It participates in protein modification; lipoprotein biosynthesis (diacylglyceryl transfer). Catalyzes the transfer of the diacylglyceryl group from phosphatidylglycerol to the sulfhydryl group of the N-terminal cysteine of a prolipoprotein, the first step in the formation of mature lipoproteins. The sequence is that of Phosphatidylglycerol--prolipoprotein diacylglyceryl transferase from Caldanaerobacter subterraneus subsp. tengcongensis (strain DSM 15242 / JCM 11007 / NBRC 100824 / MB4) (Thermoanaerobacter tengcongensis).